The primary structure comprises 516 residues: Bifunctional purine biosynthesis protein PurH (516 aa).

One can recognise an MGS-like domain in the interval 1 to 150 (MSDDRKQIKR…KNHPSVAVVV (150 aa)).

It belongs to the PurH family.

It catalyses the reaction (6R)-10-formyltetrahydrofolate + 5-amino-1-(5-phospho-beta-D-ribosyl)imidazole-4-carboxamide = 5-formamido-1-(5-phospho-D-ribosyl)imidazole-4-carboxamide + (6S)-5,6,7,8-tetrahydrofolate. It carries out the reaction IMP + H2O = 5-formamido-1-(5-phospho-D-ribosyl)imidazole-4-carboxamide. It functions in the pathway purine metabolism; IMP biosynthesis via de novo pathway; 5-formamido-1-(5-phospho-D-ribosyl)imidazole-4-carboxamide from 5-amino-1-(5-phospho-D-ribosyl)imidazole-4-carboxamide (10-formyl THF route): step 1/1. The protein operates within purine metabolism; IMP biosynthesis via de novo pathway; IMP from 5-formamido-1-(5-phospho-D-ribosyl)imidazole-4-carboxamide: step 1/1. The polypeptide is Bifunctional purine biosynthesis protein PurH (Corynebacterium ammoniagenes (Brevibacterium ammoniagenes)).